The following is an 89-amino-acid chain: Phosphocarrier protein HPr (89 aa).

One can recognise an HPr domain in the interval 1-89 (MERTVTVVPE…DILSTPEAKQ (89 aa)). Residue H14 is the Pros-phosphohistidine intermediate of the active site. The residue at position 47 (S47) is a Phosphoserine; by HPrK/P.

It belongs to the HPr family.

It is found in the cytoplasm. With respect to regulation, phosphorylation on Ser-47 inhibits the phosphoryl transfer from enzyme I to HPr. Functionally, general (non sugar-specific) component of the phosphoenolpyruvate-dependent sugar phosphotransferase system (sugar PTS). This major carbohydrate active-transport system catalyzes the phosphorylation of incoming sugar substrates concomitantly with their translocation across the cell membrane. The phosphoryl group from phosphoenolpyruvate (PEP) is transferred to the phosphoryl carrier protein HPr by enzyme I. Phospho-HPr then transfers it to the PTS EIIA domain. Is involved in fructose transport. The polypeptide is Phosphocarrier protein HPr (ptsH1) (Haloferax volcanii (strain ATCC 29605 / DSM 3757 / JCM 8879 / NBRC 14742 / NCIMB 2012 / VKM B-1768 / DS2) (Halobacterium volcanii)).